Here is a 216-residue protein sequence, read N- to C-terminus: Adenylate kinase (216 aa).

Residue 10-15 (GAGKGT) coordinates ATP. Residues 30–59 (STGDMLRAAVKAGTPLGLELKKVMDAGQLV) are NMP. AMP-binding positions include threonine 31, arginine 36, 57–59 (QLV), 85–88 (GFPR), and glutamine 92. Residues 122-159 (GRRVHLASGRTYHIQYNPPKVEGKDDETGEDLIQRDDD) form an LID region. Residues arginine 123 and 132–133 (TY) each bind ATP. AMP-binding residues include arginine 156 and arginine 167. ATP is bound at residue glycine 202.

Belongs to the adenylate kinase family. As to quaternary structure, monomer.

Its subcellular location is the cytoplasm. It carries out the reaction AMP + ATP = 2 ADP. Its pathway is purine metabolism; AMP biosynthesis via salvage pathway; AMP from ADP: step 1/1. In terms of biological role, catalyzes the reversible transfer of the terminal phosphate group between ATP and AMP. Plays an important role in cellular energy homeostasis and in adenine nucleotide metabolism. This is Adenylate kinase from Pseudomonas putida (strain ATCC 700007 / DSM 6899 / JCM 31910 / BCRC 17059 / LMG 24140 / F1).